The chain runs to 234 residues: Ankyrin repeat-containing protein C6C3.08 (234 aa).

ANK repeat units follow at residues 36-66 (DKRT…KPDE), 70-100 (AGWT…DVDP), 106-135 (GGQT…ELIR), 140-169 (QGQT…PLNT), and 173-203 (YGFT…TLRK).

This Schizosaccharomyces pombe (strain 972 / ATCC 24843) (Fission yeast) protein is Ankyrin repeat-containing protein C6C3.08.